Consider the following 370-residue polypeptide: Histidinol-phosphate aminotransferase (370 aa).

Lysine 223 carries the N6-(pyridoxal phosphate)lysine modification.

Belongs to the class-II pyridoxal-phosphate-dependent aminotransferase family. Histidinol-phosphate aminotransferase subfamily. Homodimer. Pyridoxal 5'-phosphate is required as a cofactor.

The catalysed reaction is L-histidinol phosphate + 2-oxoglutarate = 3-(imidazol-4-yl)-2-oxopropyl phosphate + L-glutamate. The protein operates within amino-acid biosynthesis; L-histidine biosynthesis; L-histidine from 5-phospho-alpha-D-ribose 1-diphosphate: step 7/9. This chain is Histidinol-phosphate aminotransferase, found in Methylobacterium nodulans (strain LMG 21967 / CNCM I-2342 / ORS 2060).